The primary structure comprises 367 residues: Histidinol-phosphate aminotransferase (367 aa).

N6-(pyridoxal phosphate)lysine is present on lysine 227.

This sequence belongs to the class-II pyridoxal-phosphate-dependent aminotransferase family. Histidinol-phosphate aminotransferase subfamily. As to quaternary structure, homodimer. Pyridoxal 5'-phosphate serves as cofactor.

It catalyses the reaction L-histidinol phosphate + 2-oxoglutarate = 3-(imidazol-4-yl)-2-oxopropyl phosphate + L-glutamate. It functions in the pathway amino-acid biosynthesis; L-histidine biosynthesis; L-histidine from 5-phospho-alpha-D-ribose 1-diphosphate: step 7/9. The chain is Histidinol-phosphate aminotransferase from Leptospira borgpetersenii serovar Hardjo-bovis (strain JB197).